The chain runs to 454 residues: Bifunctional protein GlmU (454 aa).

Residues 1–226 (MSLNVVILAA…PIETEGANNR (226 aa)) form a pyrophosphorylase region. UDP-N-acetyl-alpha-D-glucosamine-binding positions include 8 to 11 (LAAG), Lys-22, Gln-73, 78 to 79 (GT), 100 to 102 (YGD), Gly-137, Glu-151, Asn-166, and Asn-224. Asp-102 contributes to the Mg(2+) binding site. Asn-224 is a binding site for Mg(2+). Residues 227 to 247 (VQLAALERAYQARRAEELMLA) are linker. Positions 248 to 454 (GANLRDPARI…GWQRPVKKPK (207 aa)) are N-acetyltransferase. UDP-N-acetyl-alpha-D-glucosamine-binding residues include Arg-330 and Lys-348. His-360 (proton acceptor) is an active-site residue. 2 residues coordinate UDP-N-acetyl-alpha-D-glucosamine: Tyr-363 and Asn-374. Residues Ala-377, 383 to 384 (NY), Ser-402, Ala-420, and Arg-437 contribute to the acetyl-CoA site.

In the N-terminal section; belongs to the N-acetylglucosamine-1-phosphate uridyltransferase family. This sequence in the C-terminal section; belongs to the transferase hexapeptide repeat family. In terms of assembly, homotrimer. Mg(2+) is required as a cofactor.

It localises to the cytoplasm. The catalysed reaction is alpha-D-glucosamine 1-phosphate + acetyl-CoA = N-acetyl-alpha-D-glucosamine 1-phosphate + CoA + H(+). It carries out the reaction N-acetyl-alpha-D-glucosamine 1-phosphate + UTP + H(+) = UDP-N-acetyl-alpha-D-glucosamine + diphosphate. The protein operates within nucleotide-sugar biosynthesis; UDP-N-acetyl-alpha-D-glucosamine biosynthesis; N-acetyl-alpha-D-glucosamine 1-phosphate from alpha-D-glucosamine 6-phosphate (route II): step 2/2. Its pathway is nucleotide-sugar biosynthesis; UDP-N-acetyl-alpha-D-glucosamine biosynthesis; UDP-N-acetyl-alpha-D-glucosamine from N-acetyl-alpha-D-glucosamine 1-phosphate: step 1/1. It functions in the pathway bacterial outer membrane biogenesis; LPS lipid A biosynthesis. Its function is as follows. Catalyzes the last two sequential reactions in the de novo biosynthetic pathway for UDP-N-acetylglucosamine (UDP-GlcNAc). The C-terminal domain catalyzes the transfer of acetyl group from acetyl coenzyme A to glucosamine-1-phosphate (GlcN-1-P) to produce N-acetylglucosamine-1-phosphate (GlcNAc-1-P), which is converted into UDP-GlcNAc by the transfer of uridine 5-monophosphate (from uridine 5-triphosphate), a reaction catalyzed by the N-terminal domain. This is Bifunctional protein GlmU from Shewanella amazonensis (strain ATCC BAA-1098 / SB2B).